A 209-amino-acid chain; its full sequence is Thymidylate kinase (209 aa).

7-14 (GVEGSGKS) provides a ligand contact to ATP.

The protein belongs to the thymidylate kinase family.

It carries out the reaction dTMP + ATP = dTDP + ADP. In terms of biological role, phosphorylation of dTMP to form dTDP in both de novo and salvage pathways of dTTP synthesis. The chain is Thymidylate kinase from Solidesulfovibrio magneticus (strain ATCC 700980 / DSM 13731 / RS-1) (Desulfovibrio magneticus).